The chain runs to 87 residues: MDQLNGKEQQEFQKIVEQKQMKDFMRLYSNLVERCFSDCVNDFTSAKLTSKEQNCIMRCSEKFLKHSERVGQRFQEQNAAMNQTMGR.

Residues 35 to 59 carry the Twin CX3C motif motif; sequence CFSDCVNDFTSAKLTSKEQNCIMRC. 2 cysteine pairs are disulfide-bonded: cysteine 35-cysteine 59 and cysteine 39-cysteine 55.

It belongs to the small Tim family. As to quaternary structure, heterohexamer; composed of 3 copies of TIM9 and 3 copies of TIM10, named soluble 70 kDa complex. Associates with the TIM22 complex, whose core is composed of TIM22 and TIM54. Interacts with the transmembrane regions of multi-pass transmembrane proteins in transit.

The protein localises to the mitochondrion inner membrane. In terms of biological role, mitochondrial intermembrane chaperone that participates in the import and insertion of multi-pass transmembrane proteins into the mitochondrial inner membrane. Also required for the transfer of beta-barrel precursors from the TOM complex to the sorting and assembly machinery (SAM complex) of the outer membrane. Acts as a chaperone-like protein that protects the hydrophobic precursors from aggregation and guide them through the mitochondrial intermembrane space. This chain is Mitochondrial import inner membrane translocase subunit TIM9 (TIM9), found in Kluyveromyces lactis (strain ATCC 8585 / CBS 2359 / DSM 70799 / NBRC 1267 / NRRL Y-1140 / WM37) (Yeast).